Reading from the N-terminus, the 345-residue chain is Mannonate dehydratase 2 (345 aa).

It belongs to the mannonate dehydratase family. Fe(2+) is required as a cofactor. Requires Mn(2+) as cofactor.

It catalyses the reaction D-mannonate = 2-dehydro-3-deoxy-D-gluconate + H2O. The protein operates within carbohydrate metabolism; pentose and glucuronate interconversion. Its function is as follows. Catalyzes the dehydration of D-mannonate. This Halalkalibacterium halodurans (strain ATCC BAA-125 / DSM 18197 / FERM 7344 / JCM 9153 / C-125) (Bacillus halodurans) protein is Mannonate dehydratase 2 (uxuA2).